Here is a 122-residue protein sequence, read N- to C-terminus: Putative iron-sulfur cluster insertion protein ErpA (122 aa).

3 residues coordinate iron-sulfur cluster: C50, C114, and C116.

This sequence belongs to the HesB/IscA family. As to quaternary structure, homodimer. The cofactor is iron-sulfur cluster.

Its function is as follows. Required for insertion of 4Fe-4S clusters. The protein is Putative iron-sulfur cluster insertion protein ErpA of Bordetella petrii (strain ATCC BAA-461 / DSM 12804 / CCUG 43448).